The chain runs to 65 residues: Toxin VmKTx1 (65 aa).

An N-terminal signal peptide occupies residues 1–21 (MKTSCLLTILLLSFLVAVAVA). A propeptide spanning residues 22-28 (EGERSAR) is cleaved from the precursor. Disulfide bonds link cysteine 34–cysteine 54, cysteine 40–cysteine 59, cysteine 44–cysteine 61, and cysteine 49–cysteine 64. The residue at position 64 (cysteine 64) is a Cysteine amide.

It belongs to the short scorpion toxin superfamily. Potassium channel inhibitor family. Alpha-KTx 23 subfamily. As to expression, expressed by the venom gland.

It is found in the secreted. In terms of biological role, voltage-gated potassium channel inhibitor. Selectively and reversibly binds (Kd=0.77 nM) and blocks hKv1.3/KCNA3 potassium channels of human T-lymphocytes. Also shows a very weak effect on hKv1.2/KCNA2 (Kd=7.1 uM). Also reduces the fraction of CD40L expressing T cells that are stimulated by alphaCD3/alphaCD28. This is Toxin VmKTx1 from Vaejovis mexicanus smithi (Mexican scorpion).